The following is a 480-amino-acid chain: Methylenetetrahydrofolate--tRNA-(uracil-5-)-methyltransferase TrmFO (480 aa).

15 to 20 (GGGLAG) serves as a coordination point for FAD.

This sequence belongs to the MnmG family. TrmFO subfamily. Requires FAD as cofactor.

It localises to the cytoplasm. It catalyses the reaction uridine(54) in tRNA + (6R)-5,10-methylene-5,6,7,8-tetrahydrofolate + NADH + H(+) = 5-methyluridine(54) in tRNA + (6S)-5,6,7,8-tetrahydrofolate + NAD(+). It carries out the reaction uridine(54) in tRNA + (6R)-5,10-methylene-5,6,7,8-tetrahydrofolate + NADPH + H(+) = 5-methyluridine(54) in tRNA + (6S)-5,6,7,8-tetrahydrofolate + NADP(+). Functionally, catalyzes the folate-dependent formation of 5-methyl-uridine at position 54 (M-5-U54) in all tRNAs. This is Methylenetetrahydrofolate--tRNA-(uracil-5-)-methyltransferase TrmFO from Sinorhizobium medicae (strain WSM419) (Ensifer medicae).